The primary structure comprises 122 residues: Movement protein TGB2 (122 aa).

The Cytoplasmic portion of the chain corresponds to 1–12 (MVKSTVPTRPNK). Residues 13 to 33 (YWPGVVAIGLVSLFIFLSVSN) traverse the membrane as a helical segment. Over 34–76 (QKHSTTSGDNIHKFSNGGTYRDGSKCITYNRNSPLAYNGSSSN) the chain is Lumenal. Residues 77 to 97 (NTLFWLCLLGLSMVWIAYCGY) form a helical membrane-spanning segment. At 98–122 (KSLSGQWHSCQHDKNERNFLFECFE) the chain is on the cytoplasmic side.

Belongs to the virgaviridae/benyvirus TGB2 movement protein family. As to quaternary structure, interacts with movement protein TGB3. TGB1-TGB3-TGB2 complex formation is enhanced by ATP hydrolysis.

Its subcellular location is the host cell junction. The protein resides in the host plasmodesma. It localises to the host endoplasmic reticulum membrane. The protein localises to the host cytoplasm. It is found in the host cytoskeleton. Participates in the transport of viral genome to neighboring plant cells directly through plasmodesmata, without any budding. TGBp2 and TGBp3 are necessary for intracellular delivery of TGBp1-containing vRNPs to plasmodesmata. Can gate plasmodesmata and increase their size exclusion limit. To a lesser extent than TGB3, induces host actin cytoskeleton network thickening, which probably plays a major role in virus cell-to-cell movement. In Peanut clump virus (isolate 87/TGTA2) (PCV), this protein is Movement protein TGB2.